A 166-amino-acid polypeptide reads, in one-letter code: Large ribosomal subunit protein uL10 (166 aa).

It belongs to the universal ribosomal protein uL10 family. In terms of assembly, part of the ribosomal stalk of the 50S ribosomal subunit. The N-terminus interacts with L11 and the large rRNA to form the base of the stalk. The C-terminus forms an elongated spine to which L12 dimers bind in a sequential fashion forming a multimeric L10(L12)X complex.

Forms part of the ribosomal stalk, playing a central role in the interaction of the ribosome with GTP-bound translation factors. This Shewanella oneidensis (strain ATCC 700550 / JCM 31522 / CIP 106686 / LMG 19005 / NCIMB 14063 / MR-1) protein is Large ribosomal subunit protein uL10.